Reading from the N-terminus, the 144-residue chain is Large ribosomal subunit protein uL14 (144 aa).

This sequence belongs to the universal ribosomal protein uL14 family. As to quaternary structure, part of the 50S ribosomal subunit. Forms a cluster with proteins L3 and L24e, part of which may contact the 16S rRNA in 2 intersubunit bridges.

In terms of biological role, binds to 23S rRNA. Forms part of two intersubunit bridges in the 70S ribosome. The polypeptide is Large ribosomal subunit protein uL14 (Pyrobaculum aerophilum (strain ATCC 51768 / DSM 7523 / JCM 9630 / CIP 104966 / NBRC 100827 / IM2)).